Consider the following 156-residue polypeptide: CRIB domain-containing protein RIC11 (156 aa).

A CRIB domain is found at 26 to 39; that stretch reads IGHPTEVKHVAHIG. The interval 87 to 156 is disordered; the sequence is QDQLNISDRI…SMVSRLNSNA (70 aa). Residues 109 to 120 are compositionally biased toward basic residues; it reads IHTKSKNRRKKP. The span at 121-142 shows a compositional bias: low complexity; that stretch reads SSTSSPRSRPSPKSSRSMGLSK.

Its function is as follows. Functions as a downstream effector of Rho-related GTP binding proteins of the 'Rho of Plants' (ROPs) family. Participates in the propagation of ROP GTPase signals in specific cellular responses. The sequence is that of CRIB domain-containing protein RIC11 (RIC11) from Arabidopsis thaliana (Mouse-ear cress).